The chain runs to 526 residues: Inosine-5'-monophosphate dehydrogenase (526 aa).

2 CBS domains span residues 120–179 and 183–239; these read FIQD…EDPV and MATD…PLAS. NAD(+) contacts are provided by residues 276-278 and 326-328; these read DSS and GMG. G328 and G330 together coordinate K(+). S331 lines the IMP pocket. K(+) is bound at residue C333. C333 (thioimidate intermediate) is an active-site residue. IMP contacts are provided by residues 366-368 and 389-390; these read DGG and GS. Catalysis depends on R439, which acts as the Proton acceptor. Position 451 (Q451) interacts with IMP. Position 506 (S506) interacts with K(+). Positions 506–526 are disordered; the sequence is SAQTEGNVHGLHTHEKKLYSS. The segment covering 517–526 has biased composition (basic and acidic residues); that stretch reads HTHEKKLYSS.

This sequence belongs to the IMPDH/GMPR family. In terms of assembly, homotetramer. K(+) serves as cofactor.

It localises to the cytoplasm. It carries out the reaction IMP + NAD(+) + H2O = XMP + NADH + H(+). It functions in the pathway secondary metabolite biosynthesis; terpenoid biosynthesis. Its activity is regulated as follows. Mycophenolic acid (MPA) is a non-competitive inhibitor that prevents formation of the closed enzyme conformation by binding to the same site as the amobile flap. In contrast, mizoribine monophosphate (MZP) is a competitive inhibitor that induces the closed conformation. MPA is a potent inhibitor of mammalian IMPDHs but a poor inhibitor of the bacterial enzymes. MZP is a more potent inhibitor of bacterial IMPDH. Its function is as follows. Catalyzes the conversion of inosine 5'-phosphate (IMP) to xanthosine 5'-phosphate (XMP), the first committed and rate-limiting step in the de novo synthesis of guanine nucleotides, and therefore plays an important role in the regulation of cell growth. Part of the gene cluster that mediates the biosynthesis of mycophenolic acid (MPA), the first isolated antibiotic natural product in the world. Does not play a role in the biosynthesis of MPA, but is involved in self resistance to MPA, since MPA acts as an inhibitor of IMP dehydrogenases. The chain is Inosine-5'-monophosphate dehydrogenase from Penicillium roqueforti (strain FM164).